The chain runs to 512 residues: Bifunctional purine biosynthesis protein PurH (512 aa).

The region spanning 1 to 146 (MTIKRALISV…KNHQDVTVIV (146 aa)) is the MGS-like domain.

It belongs to the PurH family.

The enzyme catalyses (6R)-10-formyltetrahydrofolate + 5-amino-1-(5-phospho-beta-D-ribosyl)imidazole-4-carboxamide = 5-formamido-1-(5-phospho-D-ribosyl)imidazole-4-carboxamide + (6S)-5,6,7,8-tetrahydrofolate. It carries out the reaction IMP + H2O = 5-formamido-1-(5-phospho-D-ribosyl)imidazole-4-carboxamide. Its pathway is purine metabolism; IMP biosynthesis via de novo pathway; 5-formamido-1-(5-phospho-D-ribosyl)imidazole-4-carboxamide from 5-amino-1-(5-phospho-D-ribosyl)imidazole-4-carboxamide (10-formyl THF route): step 1/1. It participates in purine metabolism; IMP biosynthesis via de novo pathway; IMP from 5-formamido-1-(5-phospho-D-ribosyl)imidazole-4-carboxamide: step 1/1. This chain is Bifunctional purine biosynthesis protein PurH, found in Bacillus subtilis (strain 168).